We begin with the raw amino-acid sequence, 261 residues long: Endonuclease NucS (261 aa).

Belongs to the NucS endonuclease family.

It localises to the cytoplasm. In terms of biological role, cleaves both 3' and 5' ssDNA extremities of branched DNA structures. This is Endonuclease NucS from Aeropyrum pernix (strain ATCC 700893 / DSM 11879 / JCM 9820 / NBRC 100138 / K1).